Reading from the N-terminus, the 488-residue chain is Glutamyl-tRNA(Gln) amidotransferase subunit A (488 aa).

Active-site charge relay system residues include Lys77 and Ser152. Ser176 acts as the Acyl-ester intermediate in catalysis.

The protein belongs to the amidase family. GatA subfamily. As to quaternary structure, heterotrimer of A, B and C subunits.

The catalysed reaction is L-glutamyl-tRNA(Gln) + L-glutamine + ATP + H2O = L-glutaminyl-tRNA(Gln) + L-glutamate + ADP + phosphate + H(+). In terms of biological role, allows the formation of correctly charged Gln-tRNA(Gln) through the transamidation of misacylated Glu-tRNA(Gln) in organisms which lack glutaminyl-tRNA synthetase. The reaction takes place in the presence of glutamine and ATP through an activated gamma-phospho-Glu-tRNA(Gln). The chain is Glutamyl-tRNA(Gln) amidotransferase subunit A from Streptococcus pneumoniae (strain JJA).